The primary structure comprises 330 residues: Glycerol-3-phosphate dehydrogenase [NAD(P)+] (330 aa).

NADPH contacts are provided by Ser-10, Trp-11, Arg-31, and Lys-105. Sn-glycerol 3-phosphate contacts are provided by Lys-105, Gly-135, and Ser-137. NADPH is bound at residue Ala-139. Sn-glycerol 3-phosphate-binding residues include Lys-190, Asp-243, Ser-253, Arg-254, and Asn-255. Lys-190 functions as the Proton acceptor in the catalytic mechanism. Arg-254 is a binding site for NADPH. The NADPH site is built by Val-278 and Glu-280.

Belongs to the NAD-dependent glycerol-3-phosphate dehydrogenase family.

It localises to the cytoplasm. The enzyme catalyses sn-glycerol 3-phosphate + NAD(+) = dihydroxyacetone phosphate + NADH + H(+). It carries out the reaction sn-glycerol 3-phosphate + NADP(+) = dihydroxyacetone phosphate + NADPH + H(+). It participates in membrane lipid metabolism; glycerophospholipid metabolism. Functionally, catalyzes the reduction of the glycolytic intermediate dihydroxyacetone phosphate (DHAP) to sn-glycerol 3-phosphate (G3P), the key precursor for phospholipid synthesis. The protein is Glycerol-3-phosphate dehydrogenase [NAD(P)+] of Nitratidesulfovibrio vulgaris (strain ATCC 29579 / DSM 644 / CCUG 34227 / NCIMB 8303 / VKM B-1760 / Hildenborough) (Desulfovibrio vulgaris).